The sequence spans 163 residues: Ribonuclease H (163 aa).

One can recognise an RNase H type-1 domain in the interval 16–157 (TTSPVEIYCD…CDSLARQAIT (142 aa)). The Mg(2+) site is built by Asp-25, Glu-63, Asp-85, and Asp-149.

This sequence belongs to the RNase H family. As to quaternary structure, monomer. Mg(2+) is required as a cofactor.

The protein localises to the cytoplasm. The catalysed reaction is Endonucleolytic cleavage to 5'-phosphomonoester.. Endonuclease that specifically degrades the RNA of RNA-DNA hybrids. The polypeptide is Ribonuclease H (Pelobacter propionicus (strain DSM 2379 / NBRC 103807 / OttBd1)).